A 198-amino-acid chain; its full sequence is Armadillo repeat-containing protein 7 (198 aa).

ARM repeat units follow at residues 57–99 (QVLD…QAGG) and 100–140 (LPLI…TSLP). The residue at position 169 (serine 169) is a Phosphoserine.

In terms of assembly, component of the minor spliceosome. Within this complex, interacts with RBM48.

As a component of the minor spliceosome, involved in the splicing of U12-type introns in pre-mRNAs. The sequence is that of Armadillo repeat-containing protein 7 (Armc7) from Mus musculus (Mouse).